The sequence spans 434 residues: Beta-enolase (434 aa).

N-acetylalanine is present on Ala2. Phosphothreonine is present on Thr72. Ser83 and Ser157 each carry phosphoserine. Residues His158 and Glu167 each contribute to the substrate site. At Ser176 the chain carries Phosphoserine. Phosphothreonine is present on Thr205. Glu210 serves as the catalytic Proton donor. Thr229 carries the post-translational modification Phosphothreonine. Position 236 is a phosphotyrosine (Tyr236). Residue Asp245 participates in Mg(2+) binding. Ser263 bears the Phosphoserine mark. The substrate site is built by Glu293 and Asp318. The Mg(2+) site is built by Glu293 and Asp318. Catalysis depends on Lys343, which acts as the Proton acceptor. Residues 370–373 (SHRS) and Lys394 each bind substrate.

This sequence belongs to the enolase family. In terms of assembly, mammalian enolase is composed of 3 isozyme subunits, alpha, beta and gamma, which can form homodimers or heterodimers which are cell-type and development-specific. Interacts with PNKD. Mg(2+) serves as cofactor. The alpha/alpha homodimer is expressed in embryo and in most adult tissues. The alpha/beta heterodimer and the beta/beta homodimer are found in striated muscle, and the alpha/gamma heterodimer and the gamma/gamma homodimer in neurons.

The protein localises to the cytoplasm. It carries out the reaction (2R)-2-phosphoglycerate = phosphoenolpyruvate + H2O. It participates in carbohydrate degradation; glycolysis; pyruvate from D-glyceraldehyde 3-phosphate: step 4/5. Glycolytic enzyme that catalyzes the conversion of 2-phosphoglycerate to phosphoenolpyruvate. Appears to have a function in striated muscle development and regeneration. This chain is Beta-enolase (ENO3), found in Homo sapiens (Human).